A 133-amino-acid chain; its full sequence is Putative pre-16S rRNA nuclease (133 aa).

Belongs to the YqgF nuclease family.

Its subcellular location is the cytoplasm. Could be a nuclease involved in processing of the 5'-end of pre-16S rRNA. The chain is Putative pre-16S rRNA nuclease from Bordetella bronchiseptica (strain ATCC BAA-588 / NCTC 13252 / RB50) (Alcaligenes bronchisepticus).